We begin with the raw amino-acid sequence, 465 residues long: Light-independent protochlorophyllide reductase subunit N (465 aa).

[4Fe-4S] cluster contacts are provided by cysteine 22, cysteine 47, and cysteine 107.

This sequence belongs to the BchN/ChlN family. Protochlorophyllide reductase is composed of three subunits; ChlL, ChlN and ChlB. Forms a heterotetramer of two ChlB and two ChlN subunits. It depends on [4Fe-4S] cluster as a cofactor.

The protein localises to the plastid. The protein resides in the chloroplast. It carries out the reaction chlorophyllide a + oxidized 2[4Fe-4S]-[ferredoxin] + 2 ADP + 2 phosphate = protochlorophyllide a + reduced 2[4Fe-4S]-[ferredoxin] + 2 ATP + 2 H2O. Its pathway is porphyrin-containing compound metabolism; chlorophyll biosynthesis (light-independent). In terms of biological role, component of the dark-operative protochlorophyllide reductase (DPOR) that uses Mg-ATP and reduced ferredoxin to reduce ring D of protochlorophyllide (Pchlide) to form chlorophyllide a (Chlide). This reaction is light-independent. The NB-protein (ChlN-ChlB) is the catalytic component of the complex. This Marchantia polymorpha (Common liverwort) protein is Light-independent protochlorophyllide reductase subunit N.